The sequence spans 348 residues: Protein RecA (348 aa).

65–72 (GPESSGKT) contacts ATP.

This sequence belongs to the RecA family.

The protein resides in the cytoplasm. In terms of biological role, can catalyze the hydrolysis of ATP in the presence of single-stranded DNA, the ATP-dependent uptake of single-stranded DNA by duplex DNA, and the ATP-dependent hybridization of homologous single-stranded DNAs. It interacts with LexA causing its activation and leading to its autocatalytic cleavage. This Vibrio natriegens protein is Protein RecA.